The primary structure comprises 502 residues: Protein krueppel (502 aa).

2 disordered regions span residues 115–164 (PPQG…KLSV) and 178–202 (DMYH…THDG). 2 stretches are compositionally biased toward low complexity: residues 119-136 (THLH…STPL) and 183-198 (SGGP…SPNS). 5 consecutive C2H2-type zinc fingers follow at residues 222-244 (FTCK…ERTH), 250-272 (FECP…MRLH), 278-300 (YHCS…LRVH), 306-328 (YTCE…MLVH), and 334-354 (FECE…NHKC). Disordered stretches follow at residues 399-427 (NESV…SVDG) and 445-502 (RLPP…HQQH). Residues 410–419 (EDDGPLDLSE) are compositionally biased toward acidic residues. 3 positions are modified to phosphoserine: serine 468, serine 471, and serine 477. Residues 482–491 (DDIDLYDLDD) are compositionally biased toward acidic residues.

Belongs to the krueppel C2H2-type zinc-finger protein family.

It is found in the nucleus. In terms of biological role, krueppel is a gap class segmentation protein. It is involved in the segmentation of the embryo and in the differentiation of the Malpighian tubules. In Drosophila melanogaster (Fruit fly), this protein is Protein krueppel (Kr).